A 110-amino-acid chain; its full sequence is tRNA-binding protein YgjH (110 aa).

The tRNA-binding domain maps to 8–110 (DFARLEMRVG…RMMPAGVRVV (103 aa)).

As to quaternary structure, homodimer.

The sequence is that of tRNA-binding protein YgjH (ygjH) from Escherichia coli (strain K12).